The following is a 209-amino-acid chain: Large ribosomal subunit protein uL3 (209 aa).

A disordered region spans residues 133 to 152; that stretch reads THGNSLSHRVPGSIGQNQTP. Position 150 is an N5-methylglutamine (Gln-150).

This sequence belongs to the universal ribosomal protein uL3 family. As to quaternary structure, part of the 50S ribosomal subunit. Forms a cluster with proteins L14 and L19. Methylated by PrmB.

Its function is as follows. One of the primary rRNA binding proteins, it binds directly near the 3'-end of the 23S rRNA, where it nucleates assembly of the 50S subunit. The protein is Large ribosomal subunit protein uL3 of Shigella sonnei (strain Ss046).